Consider the following 147-residue polypeptide: Transmembrane protein 210 (147 aa).

Positions 1–31 (MAPGPWPVSCLRGGPLGLTYLSLLLIPAAAG) are cleaved as a signal peptide. Over 32–47 (TYCECSLGLSREALIA) the chain is Extracellular. A helical membrane pass occupies residues 48-68 (LLVVLAGISASCFCALVIVAI). The Cytoplasmic segment spans residues 69–147 (GVLRAKGETC…PPPPPPLPPE (79 aa)). A disordered region spans residues 128–147 (AIPMEASSEEPPPPPPLPPE). A compositionally biased stretch (pro residues) spans 137-147 (EPPPPPPLPPE).

It localises to the membrane. It is found in the cytoplasmic vesicle. Its subcellular location is the secretory vesicle. The protein localises to the acrosome. The polypeptide is Transmembrane protein 210 (TMEM210) (Homo sapiens (Human)).